A 1265-amino-acid polypeptide reads, in one-letter code: Protein transport protein SEC31 (1265 aa).

7 WD repeats span residues 6 to 46 (EIAR…ELWD), 61 to 105 (TVDN…KTKD), 116 to 156 (KHTG…EPFA), 162 to 202 (TPMD…EVLH), 209 to 252 (GGRA…APEK), 256 to 296 (GHKK…KLGE), and 299 to 339 (TTAN…PSVS). The stretch at 380 to 403 (SFGFGSKLVIINTDSSGKSTVKVD) is one WD 8; interaction with SEC13 repeat. The segment covering 457 to 480 (KESLFEDANNDEKEATSPETKKEN) has biased composition (basic and acidic residues). Disordered regions lie at residues 457-485 (KESL…EDDF), 765-784 (VKSS…GQTR), and 793-1163 (PAYA…IPEN). The segment covering 794–810 (AYAPPVQAPPVQAPQPP) has biased composition (pro residues). Composition is skewed to low complexity over residues 811 to 824 (LVQQ…QQQP), 865 to 875 (TPSSLSGTTSG), 901 to 931 (AKTA…FGSP), 939 to 951 (SQPG…SSAG), and 969 to 987 (SISR…TVPA). Polar residues predominate over residues 1004–1023 (SDASQPPSSGFASPTLNSSP). Pro residues-rich tracts occupy residues 1062 to 1071 (YAPPKNPYAV) and 1083 to 1101 (APPP…PPQP).

The protein belongs to the WD repeat SEC31 family. In terms of assembly, the COPII coat is composed of at least 5 proteins: the SEC23/24 complex, the SEC13/31 complex, and the protein SAR1. SEC13 and SEC31 make a 2:2 tetramer that forms the edge element of the COPII outer coat. The tetramer self-assembles in multiple copies to form the complete polyhedral cage. Interacts (via WD 8) with SEC13.

It is found in the cytoplasmic vesicle. It localises to the COPII-coated vesicle membrane. The protein localises to the endoplasmic reticulum membrane. In terms of biological role, component of the coat protein complex II (COPII) which promotes the formation of transport vesicles from the endoplasmic reticulum (ER). The coat has two main functions, the physical deformation of the endoplasmic reticulum membrane into vesicles and the selection of cargo molecules. This chain is Protein transport protein SEC31 (PGA63), found in Candida albicans (strain SC5314 / ATCC MYA-2876) (Yeast).